Reading from the N-terminus, the 301-residue chain is Rhodopsin (301 aa).

Residues 1 to 18 (LHMIHLHWYQYPPMNPMM) are Extracellular-facing. Residues 19-43 (YPLLLIFMLFTGILCLAGNFVTIWV) traverse the membrane as a helical segment. At 44-55 (FMNTKSLRTPAN) the chain is on the cytoplasmic side. Residues 56-78 (LLVVNLAMSDFLMMFTMFPPMMV) traverse the membrane as a helical segment. Residues 79 to 92 (TCYYHTWTLGPTFC) lie on the Extracellular side of the membrane. Cysteines 92 and 169 form a disulfide. Residues 93–115 (QVYAFLGNLCGCASIWTMVFITF) traverse the membrane as a helical segment. The 'Ionic lock' involved in activated form stabilization motif lies at 116 to 118 (DRY). Topologically, residues 116-134 (DRYNVIVKGVAGEPLSNKK) are cytoplasmic. A helical membrane pass occupies residues 135–155 (AAMWILSVWVLSTAWCMAPFF). Over 156–182 (GWNSYVPEGNLTGCGTDYLSEDILSRS) the chain is Extracellular. A glycan (N-linked (GlcNAc...) asparagine) is linked at Asn-165. The chain crosses the membrane as a helical span at residues 183-204 (YLYIYSTWVYFLPLTITIYCYV). At 205–245 (FIIKAVAAHEKGMRDQAKKMGIKSLRNEEAQKTSAECRLAK) the chain is on the cytoplasmic side. Residues 246-267 (IAMTTVALWFIAWTPYLLINWV) form a helical membrane-spanning segment. The Extracellular portion of the chain corresponds to 268 to 278 (GMFARSYLSPV). The chain crosses the membrane as a helical span at residues 279–300 (YTIWGYVFAKANAVYNPIVYAI). At Lys-288 the chain carries N6-(retinylidene)lysine.

Belongs to the G-protein coupled receptor 1 family. Opsin subfamily. Homodimer. Interacts with GNAQ. Contains one covalently linked retinal chromophore.

The protein resides in the cell projection. The protein localises to the rhabdomere membrane. Its function is as follows. Photoreceptor required for image-forming vision at low light intensity. Can use both retinal and 3-dehydroretinal as visual pigment. Light-induced isomerization of 11-cis to all-trans retinal triggers a conformational change that activates signaling via G-proteins. Signaling via GNAQ probably mediates the activation of phospholipase C. In Faxonius virilis (Virile crayfish), this protein is Rhodopsin (RHO).